The primary structure comprises 335 residues: Probable cytosolic iron-sulfur protein assembly protein Ciao1 (335 aa).

WD repeat units lie at residues 12-51 (GHKG…WSTK), 57-96 (GHKR…FECN), 101-140 (GHEN…EFEC), 146-185 (PHTQ…SDWD), 192-231 (SHTS…NDAG), 250-289 (QHSR…KRDE), and 301-335 (AHEQ…KMLD).

The protein belongs to the WD repeat CIA1 family.

Functionally, essential component of the cytosolic iron-sulfur (Fe/S) protein assembly machinery. Required for the maturation of extramitochondrial Fe/S proteins. The chain is Probable cytosolic iron-sulfur protein assembly protein Ciao1 from Drosophila willistoni (Fruit fly).